A 138-amino-acid polypeptide reads, in one-letter code: Putative pre-16S rRNA nuclease (138 aa).

This sequence belongs to the YqgF nuclease family.

It localises to the cytoplasm. Could be a nuclease involved in processing of the 5'-end of pre-16S rRNA. The sequence is that of Putative pre-16S rRNA nuclease from Escherichia coli O7:K1 (strain IAI39 / ExPEC).